Consider the following 553-residue polypeptide: MTDIEIADQATLEPITEIAEKLGLSEDEIEQYGKYKAKIDLNVKPLPDKKHKLILVTSINPTPAGEGKSTVLIGLGDALNQLNYQTTIAMREPSMGPVFGIKGGATGGGYSQVVPMEDINLNFTGDLHALTSANNTLAALIDNYIMRDNAMNLDPRRIIWKRVEDVNDRALRNVVTGLGGPMAGVPRETGFDITAASELMAILCLSTSLHDLKERISRIVVGYTYDKEPVTVGQLNFQDAITIILKDALKPNLVQTLDHTPTIVHGGPFANIAHGCNSVLATQTALNLSDYTVTEAGFGADLGGEKFLDIKQRVLGKHPDAIVIVATVRALEYNGGAKLADLNEENLDALKKGMANLNRHIKNMQLYGLPIVVAINHFVSDTDKEIQMIKDDCAKQNVEAILTDAWAKGGKGTHDLANKVVELADSPSEFTHIYDVQVDDLQTKLEKIAKQIYGAKEVSFSRKAQNQLKRFAKYGWNDLPVCIAKTQYSFTDDQKQLGAPTDFTFHIRELVPKIGAGFVVALAGNMMTMPGLPKEPAAVNMMIDDNGKITGLF.

62 to 69 (TPAGEGKS) is a binding site for ATP.

This sequence belongs to the formate--tetrahydrofolate ligase family.

It carries out the reaction (6S)-5,6,7,8-tetrahydrofolate + formate + ATP = (6R)-10-formyltetrahydrofolate + ADP + phosphate. Its pathway is one-carbon metabolism; tetrahydrofolate interconversion. The chain is Formate--tetrahydrofolate ligase from Limosilactobacillus reuteri subsp. reuteri (strain JCM 1112) (Lactobacillus reuteri).